A 457-amino-acid chain; its full sequence is Multidrug resistance protein MdtK (457 aa).

The next 12 membrane-spanning stretches (helical) occupy residues 11–31 (LLAL…MGFV), 53–73 (IWLP…PVIA), 93–113 (WLAG…GYII), 127–147 (AVGY…FQVA), 160–180 (GMVM…IFIY), 188–208 (LGGI…FIAM), 243–263 (LPIA…ALLV), 276–296 (IALN…AAVT), 314–334 (AART…IFTV), 350–370 (VVAL…SDSI), 387–407 (IFFI…YILA), and 418–438 (PAGF…LMML).

Belongs to the multi antimicrobial extrusion (MATE) (TC 2.A.66.1) family. MdtK subfamily.

The protein resides in the cell inner membrane. Functionally, multidrug efflux pump that functions probably as a Na(+)/drug antiporter. The polypeptide is Multidrug resistance protein MdtK (Salmonella heidelberg (strain SL476)).